A 312-amino-acid chain; its full sequence is Lipoyl synthase (312 aa).

The segment covering 1 to 10 (MNEAPAEKQK) has biased composition (basic and acidic residues). The interval 1–20 (MNEAPAEKQKPQQGKRFSER) is disordered. [4Fe-4S] cluster is bound by residues Cys-51, Cys-56, Cys-62, Cys-77, Cys-81, Cys-84, and Ser-290. Residues 63–280 (WSRKTATYLA…RSVGESLGLF (218 aa)) form the Radical SAM core domain.

This sequence belongs to the radical SAM superfamily. Lipoyl synthase family. [4Fe-4S] cluster serves as cofactor.

The protein localises to the cytoplasm. It carries out the reaction [[Fe-S] cluster scaffold protein carrying a second [4Fe-4S](2+) cluster] + N(6)-octanoyl-L-lysyl-[protein] + 2 oxidized [2Fe-2S]-[ferredoxin] + 2 S-adenosyl-L-methionine + 4 H(+) = [[Fe-S] cluster scaffold protein] + N(6)-[(R)-dihydrolipoyl]-L-lysyl-[protein] + 4 Fe(3+) + 2 hydrogen sulfide + 2 5'-deoxyadenosine + 2 L-methionine + 2 reduced [2Fe-2S]-[ferredoxin]. Its pathway is protein modification; protein lipoylation via endogenous pathway; protein N(6)-(lipoyl)lysine from octanoyl-[acyl-carrier-protein]: step 2/2. Functionally, catalyzes the radical-mediated insertion of two sulfur atoms into the C-6 and C-8 positions of the octanoyl moiety bound to the lipoyl domains of lipoate-dependent enzymes, thereby converting the octanoylated domains into lipoylated derivatives. The sequence is that of Lipoyl synthase from Chlamydia felis (strain Fe/C-56) (Chlamydophila felis).